Consider the following 474-residue polypeptide: tRNA-2-methylthio-N(6)-dimethylallyladenosine synthase (474 aa).

The MTTase N-terminal domain maps to Q3–G120. Residues C12, C49, C83, C157, C161, and C164 each coordinate [4Fe-4S] cluster. The region spanning R143–Q375 is the Radical SAM core domain. One can recognise a TRAM domain in the interval R378–R441.

The protein belongs to the methylthiotransferase family. MiaB subfamily. As to quaternary structure, monomer. [4Fe-4S] cluster serves as cofactor.

The protein resides in the cytoplasm. The enzyme catalyses N(6)-dimethylallyladenosine(37) in tRNA + (sulfur carrier)-SH + AH2 + 2 S-adenosyl-L-methionine = 2-methylsulfanyl-N(6)-dimethylallyladenosine(37) in tRNA + (sulfur carrier)-H + 5'-deoxyadenosine + L-methionine + A + S-adenosyl-L-homocysteine + 2 H(+). In terms of biological role, catalyzes the methylthiolation of N6-(dimethylallyl)adenosine (i(6)A), leading to the formation of 2-methylthio-N6-(dimethylallyl)adenosine (ms(2)i(6)A) at position 37 in tRNAs that read codons beginning with uridine. The chain is tRNA-2-methylthio-N(6)-dimethylallyladenosine synthase from Haemophilus influenzae (strain PittEE).